We begin with the raw amino-acid sequence, 212 residues long: ER lumen protein-retaining receptor 2 (212 aa).

The Lumenal segment spans residues 1–4; sequence MNVF. Residues 5–24 traverse the membrane as a helical segment; sequence RLSGDLCHLAAIIILLLKIW. The Cytoplasmic segment spans residues 25 to 32; sequence NSRSCAGI. A helical transmembrane segment spans residues 33-52; the sequence is SGKSQLLFAMVFTTRYLDLF. The interaction with the K-D-E-L motif on target proteins stretch occupies residues 47-48; that stretch reads RY. Residues 53–58 are Lumenal-facing; sequence TSFISL. The helical transmembrane segment at 59-79 threads the bilayer; it reads YNTSMKVIYMGCAYATVYLIY. Over 80–92 the chain is Cytoplasmic; the sequence is MKFKATYDGNHDT. Residues 93–110 form a helical membrane-spanning segment; the sequence is FRVEFLVVPVGGLSVLVN. Topologically, residues 111 to 116 are lumenal; that stretch reads HDFSPL. A helical membrane pass occupies residues 117–135; it reads EILWTFSIYLESVAILPQL. Over 136–149 the chain is Cytoplasmic; that stretch reads FMISKTGEAETITT. Residues 150 to 168 form a helical membrane-spanning segment; it reads HYLFFLGLYRALYLFNWIW. The interval 159-169 is interaction with the K-D-E-L motif on target proteins; the sequence is RALYLFNWIWR. Residues 169–178 lie on the Lumenal side of the membrane; that stretch reads RFSFEGFFDL. Residues 179–199 form a helical membrane-spanning segment; that stretch reads IAIVAGVVQTILYCDFFYLYV. Topologically, residues 200 to 212 are cytoplasmic; it reads TKVLKGKKLSLPA. Residues 204–207 are important for recycling of cargo proteins with the sequence motif K-D-E-L from the Golgi to the endoplasmic reticulum; sequence KGKK.

The protein belongs to the ERD2 family.

It localises to the endoplasmic reticulum membrane. Its subcellular location is the golgi apparatus membrane. The protein resides in the cytoplasmic vesicle. It is found in the COPI-coated vesicle membrane. Its function is as follows. Receptor for the C-terminal sequence motif K-D-E-L that is present on endoplasmic reticulum resident proteins and that mediates their recycling from the Golgi back to the endoplasmic reticulum. Binding is pH dependent, and is optimal at pH 5-5.4. In Xenopus laevis (African clawed frog), this protein is ER lumen protein-retaining receptor 2 (kdelr2).